Reading from the N-terminus, the 182-residue chain is UPF0397 protein BCQ_2505 (182 aa).

5 helical membrane-spanning segments follow: residues 9–29 (VVAI…GFSI), 40–60 (AILT…IGLI), 71–91 (WGIW…MGFI), 114–134 (ITGL…DIIV), and 142–162 (IVIQ…VLGL).

It belongs to the UPF0397 family.

It is found in the cell membrane. This chain is UPF0397 protein BCQ_2505, found in Bacillus cereus (strain Q1).